A 236-amino-acid chain; its full sequence is (5-formylfuran-3-yl)methyl phosphate synthase (236 aa).

K27 serves as the catalytic Schiff-base intermediate with substrate. The active-site Proton acceptor is the K85.

The protein belongs to the MfnB family.

It catalyses the reaction 2 D-glyceraldehyde 3-phosphate = 4-(hydroxymethyl)-2-furancarboxaldehyde phosphate + phosphate + 2 H2O. The protein operates within cofactor biosynthesis; methanofuran biosynthesis. In terms of biological role, catalyzes the formation of 4-(hydroxymethyl)-2-furancarboxaldehyde phosphate (4-HFC-P) from two molecules of glyceraldehyde-3-P (GA-3-P). The sequence is that of (5-formylfuran-3-yl)methyl phosphate synthase from Methanococcus maripaludis (strain C6 / ATCC BAA-1332).